The sequence spans 264 residues: Thymidylate synthase (264 aa).

R21 is a dUMP binding site. Residue H51 coordinates (6R)-5,10-methylene-5,6,7,8-tetrahydrofolate. 126–127 serves as a coordination point for dUMP; sequence RR. C146 serves as the catalytic Nucleophile. DUMP-binding positions include 166–169, N177, and 207–209; these read RSAD and HLY. D169 contributes to the (6R)-5,10-methylene-5,6,7,8-tetrahydrofolate binding site. Residue A263 coordinates (6R)-5,10-methylene-5,6,7,8-tetrahydrofolate.

Belongs to the thymidylate synthase family. Bacterial-type ThyA subfamily. Homodimer.

The protein localises to the cytoplasm. It carries out the reaction dUMP + (6R)-5,10-methylene-5,6,7,8-tetrahydrofolate = 7,8-dihydrofolate + dTMP. It participates in pyrimidine metabolism; dTTP biosynthesis. Functionally, catalyzes the reductive methylation of 2'-deoxyuridine-5'-monophosphate (dUMP) to 2'-deoxythymidine-5'-monophosphate (dTMP) while utilizing 5,10-methylenetetrahydrofolate (mTHF) as the methyl donor and reductant in the reaction, yielding dihydrofolate (DHF) as a by-product. This enzymatic reaction provides an intracellular de novo source of dTMP, an essential precursor for DNA biosynthesis. This Polynucleobacter asymbioticus (strain DSM 18221 / CIP 109841 / QLW-P1DMWA-1) (Polynucleobacter necessarius subsp. asymbioticus) protein is Thymidylate synthase.